We begin with the raw amino-acid sequence, 430 residues long: Microtubule-associated protein tau (430 aa).

The segment covering Met1–Glu16 has biased composition (basic and acidic residues). The segment at Met1–Val245 is disordered. Ala2 carries the post-translational modification N-acetylalanine. Tyr18 carries the post-translational modification Phosphotyrosine. Lys31 participates in a covalent cross-link: Glycyl lysine isopeptide (Lys-Gly) (interchain with G-Cter in ubiquitin). A phosphoserine mark is found at Ser33 and Ser48. Over residues Ser48–Thr58 the composition is skewed to polar residues. Phosphothreonine is present on residues Thr56, Thr58, and Thr98. Positions Lys117–Asp133 are enriched in basic and acidic residues. Thr142 carries the phosphothreonine modification. Arg144 carries the post-translational modification Omega-N-methylarginine. At Lys152 the chain carries N6,N6-dimethyllysine; alternate. Lys152 carries the post-translational modification N6-acetyllysine; alternate. 4 positions are modified to phosphothreonine: Thr158, Thr164, Thr165, and Thr170. Low complexity predominate over residues Pro161–Ser203. A phosphoserine mark is found at Ser180 and Ser184. Tyr186 carries the phosphotyrosine modification. A phosphoserine mark is found at Ser187, Ser188, and Ser191. Thr194 and Thr201 each carry phosphothreonine. The residue at position 203 (Ser203) is a Phosphoserine. At Thr206 the chain carries Phosphothreonine. Lys214 is subject to N6-acetyllysine. The residue at position 220 (Thr220) is a Phosphothreonine. 2 positions are modified to phosphoserine: Ser224 and Ser226. Tau/MAP repeat units lie at residues Gln233–Lys263, Val264–Ser294, Val295–Gln325, and Val326–Asn357. Lys243 participates in a covalent cross-link: Glycyl lysine isopeptide (Lys-Gly) (interchain with G-Cter in ubiquitin). Position 248 is an N6-acetyllysine; alternate (Lys248). Lys248 carries the post-translational modification N6-methyllysine; alternate. A Glycyl lysine isopeptide (Lys-Gly) (interchain with G-Cter in ubiquitin); alternate cross-link involves residue Lys248. Ser251 is modified (phosphoserine). Residue Lys256 forms a Glycyl lysine isopeptide (Lys-Gly) (interchain with G-Cter in ubiquitin) linkage. The residue at position 270 (Lys270) is an N6-acetyllysine; alternate. A Glycyl lysine isopeptide (Lys-Gly) (interchain with G-Cter in ubiquitin); alternate cross-link involves residue Lys270. 2 positions are modified to phosphoserine: Ser274 and Ser278. Lys279 carries the post-translational modification N6-acetyllysine. The cysteines at positions 280 and 311 are disulfide-linked. Residue Ser282 is modified to Phosphoserine. Lys287 carries the N6-acetyllysine; alternate modification. Residue Lys287 forms a Glycyl lysine isopeptide (Lys-Gly) (interchain with G-Cter in ubiquitin); alternate linkage. Residue Ser294 is modified to Phosphoserine. At Lys300 the chain carries N6,N6-dimethyllysine; alternate. Lys300, Lys306, and Lys310 each carry N6-acetyllysine; alternate. Glycyl lysine isopeptide (Lys-Gly) (interchain with G-Cter in ubiquitin); alternate cross-links involve residues Lys300, Lys306, and Lys310. Residue Ser313 is modified to Phosphoserine. Lys320, Lys332, and Lys336 each carry N6-acetyllysine; alternate. Residues Lys320, Lys332, and Lys336 each participate in a glycyl lysine isopeptide (Lys-Gly) (interchain with G-Cter in ubiquitin); alternate cross-link. At Arg338 the chain carries Omega-N-methylarginine. Phosphoserine is present on Ser341. Lys342 participates in a covalent cross-link: Glycyl lysine isopeptide (Lys-Gly) (interchain with G-Cter in ubiquitin). Phosphoserine is present on Ser345. N6-acetyllysine; alternate is present on Lys358. A Glycyl lysine isopeptide (Lys-Gly) (interchain with G-Cter in ubiquitin); alternate cross-link involves residue Lys358. Residue Lys364 forms a Glycyl lysine isopeptide (Lys-Gly) (interchain with G-Cter in ubiquitin) linkage. N6-acetyllysine; alternate is present on Lys374. Residue Lys374 forms a Glycyl lysine isopeptide (Lys-Gly) (interchain with G-Cter in ubiquitin); alternate linkage. Tyr383 carries the post-translational modification Phosphotyrosine. Phosphoserine is present on residues Ser385 and Ser389. Residues Val387–Ile406 form a disordered region. A compositionally biased stretch (polar residues) spans Gly390–Ile406. The residue at position 392 (Thr392) is a Phosphothreonine. Residues Ser393, Ser398, Ser405, and Ser411 each carry the phosphoserine modification. Thr416 carries the post-translational modification Phosphothreonine.

As to quaternary structure, interacts with MARK1, MARK2, MARK3 and MARK4. Interacts with SQSTM1 when polyubiquitinated. Interacts with PSMC2 through SQSTM1. Interacts with FKBP4. Binds to CSNK1D. Interacts with SGK1. Interacts with PIN1. Interacts with LRRK2. Interacts with LRP1, leading to endocytosis; this interaction is reduced in the presence of LRPAP1/RAP. Post-translationally, polyubiquitinated. Requires functional TRAF6 and may provoke SQSTM1-dependent degradation by the proteasome. In terms of processing, phosphorylation at various serine and threonine residues in S-P or T-P motifs by proline-directed protein kinases (PDPK1, CDK1, CDK5, GSK3, MAPK) (a few sites per protein in interphase, more in mitosis), and at serine residues in K-X-G-S motifs by MAP/microtubule affinity-regulating kinase (MARK1, MARK2, MARK3 or MARK4), causing detachment from microtubules, and their disassembly. Phosphorylation at Ser-345 by BRSK1 and BRSK2 in neurons affects ability to bind microtubules and plays a role in neuron polarization. Phosphorylated by PHK. Dephosphorylation at several serine and threonine residues by the serine/threonine phosphatase PPP5C. Hyperphosphorylated (in particular at Thr-170, Ser-191, Thr-194, Ser-251, and Ser-345) during hibernation. Phosphorylation is fully reversible after arousal. Highly phosphorylated tau contains a number of paired helical filaments (PHFs)-like epitopes. PHF-like phosphorylation is not associated with fibril formation. Distribution of PHF-like tau is more intense in the entorhinal cortex, hippocampus and isocortical areas. PHF-like phosphorylation-dephosphorylation during hibernation cycle is synchronized with regression-re-establishment of afferentation. It may reflect a protective mechanism in an unfavorable environment.

It localises to the cytoplasm. The protein localises to the cytosol. It is found in the cell membrane. The protein resides in the cytoskeleton. Its subcellular location is the cell projection. It localises to the axon. The protein localises to the dendrite. Functionally, promotes microtubule assembly and stability, and might be involved in the establishment and maintenance of neuronal polarity. The C-terminus binds axonal microtubules while the N-terminus binds neural plasma membrane components, suggesting that tau functions as a linker protein between both. Axonal polarity is predetermined by tau localization (in the neuronal cell) in the domain of the cell body defined by the centrosome. The short isoforms allow plasticity of the cytoskeleton whereas the longer isoforms may preferentially play a role in its stabilization. The sequence is that of Microtubule-associated protein tau (MAPT) from Spermophilus citellus (European ground squirrel).